Consider the following 71-residue polypeptide: Probable ribosome maturation protein RlbA (71 aa).

Residues 12–69 form the S4 RNA-binding domain; that stretch reads ITLGQFLKLADVIQSGGMAKWFLSEHEVLVNDEPDNRRGRKLYVGDVVEIEGFGSFQV.

Functionally, may assist in the assembly of the 50S subunit. The sequence is that of Probable ribosome maturation protein RlbA from Bacillus subtilis (strain 168).